Reading from the N-terminus, the 108-residue chain is Cyclin-dependent protein kinase inhibitor SMR13 (108 aa).

Functionally, probable cyclin-dependent protein kinase (CDK) inhibitor that functions as a repressor of mitosis in the endoreduplication cell cycle. In Arabidopsis thaliana (Mouse-ear cress), this protein is Cyclin-dependent protein kinase inhibitor SMR13.